Reading from the N-terminus, the 254-residue chain is Chalcone isomerase cfoK (254 aa).

Residues histidine 33 and tyrosine 50 contribute to the active site.

The enzyme catalyses a chalcone = a flavanone.. Its pathway is secondary metabolite biosynthesis; flavonoid biosynthesis. Its function is as follows. Chalcone isomerase; part of the gene cluster that mediates the biosynthesis of chlorflavonin, a fungal flavonoid with acetolactate synthase inhibitory activity. Within the pathway, cfoK acts as chalcone isomerase (CHI), the key enzyme responsible for the tricyclic formation of flavanone through Michael-type intramolecular cyclization of chalcone. The hydrogen at C2'-OH is extracted by the imidazole ring of His-33, which induces the oxa-Michael addition to form the intermediate enolate through 6-endo-trig mode cyclization. The enolate can then be stabilized by a hydrogen bond with the Tyr-50 residue. Following enol tautomerization, the C ring, a gamma-pyranone ring, is formed. The pathway begins with the PKS-NRPS hybrid synthetase cfoA that uses benzoic acid or p-hydroxybenzoic acid as a starter unit with four rounds of chain elongation using malonyl-CoA to form the chalcone skeleton. Then, a new type of chalcone isomerase, cfoK, catalyzes the conversion of the chalcone into a flavanone by a histidine-mediated oxa-Michael addition mechanism. The desaturation of flavanone to flavone is catalyzed by a new type of flavone synthase, the flavin mononucleotide (FMN)-dependent oxidoreductase cfoJ. Monooxygenases cfoF, cfoG, and P450 cfoH are responsible for the hydroxylation of the flavonoid skeleton at sites C3, C8, and C2', respectively. Like cfoF, the dehydratase cfoI plays also a role in the hydroxylation of position C3. Methyltransferases cfoB, cfoC, and cfoD then catalyze the methylation of C7-OH, C8-OH, and C3-OH, respectively. Finally, the monooxygenase cfoE is responsible for the chlorination of flavonoid at position C3'. The sequence is that of Chalcone isomerase cfoK from Aspergillus candidus.